Consider the following 65-residue polypeptide: Large ribosomal subunit protein bL33c (65 aa).

The protein belongs to the bacterial ribosomal protein bL33 family.

The protein resides in the plastid. It is found in the chloroplast. In Chara vulgaris (Common stonewort), this protein is Large ribosomal subunit protein bL33c.